Consider the following 429-residue polypeptide: UDP-N-acetylglucosamine 1-carboxyvinyltransferase (429 aa).

Phosphoenolpyruvate is bound at residue 22 to 23 (KN). Arg-102 lines the UDP-N-acetyl-alpha-D-glucosamine pocket. Cys-126 serves as the catalytic Proton donor. Cys-126 is subject to 2-(S-cysteinyl)pyruvic acid O-phosphothioketal. UDP-N-acetyl-alpha-D-glucosamine contacts are provided by residues 131-135 (RPVDL), Asp-316, and Ile-338.

Belongs to the EPSP synthase family. MurA subfamily.

It localises to the cytoplasm. It carries out the reaction phosphoenolpyruvate + UDP-N-acetyl-alpha-D-glucosamine = UDP-N-acetyl-3-O-(1-carboxyvinyl)-alpha-D-glucosamine + phosphate. Its pathway is cell wall biogenesis; peptidoglycan biosynthesis. Its function is as follows. Cell wall formation. Adds enolpyruvyl to UDP-N-acetylglucosamine. The polypeptide is UDP-N-acetylglucosamine 1-carboxyvinyltransferase (Methylorubrum populi (strain ATCC BAA-705 / NCIMB 13946 / BJ001) (Methylobacterium populi)).